Consider the following 63-residue polypeptide: Potassium channel toxin alpha-KTx 21.1 (63 aa).

The N-terminal stretch at 1–27 (MQFSGVVLILISMTLVNFVFFETKVEA) is a signal peptide. Cystine bridges form between C33-C53, C38-C58, and C42-C60.

Belongs to the short scorpion toxin superfamily. Potassium channel inhibitor family. Alpha-KTx 21 subfamily. In terms of tissue distribution, expressed by the venom gland.

Its subcellular location is the secreted. Functionally, reversibly and voltage-independently blocks voltage-gated potassium channels rKv1.2/KCNA2 (73%) (IC(50)=196 nM), hKv1.3/KCNA3 (50%) (IC(50)=508 nM), Shaker IR (30%), rKv1.6/KCNA6 (22%) (at 0.5 uM). Interaction of Ts15 with Kv1.3/KCNA3 is stronger than its interaction with Kv1.2/KCNA2. The polypeptide is Potassium channel toxin alpha-KTx 21.1 (Tityus serrulatus (Brazilian scorpion)).